Reading from the N-terminus, the 171-residue chain is Ribosome maturation factor RimM (171 aa).

The PRC barrel domain occupies 97–170 (EGEYYYHEII…LVTIHVMEGL (74 aa)).

Belongs to the RimM family. Binds ribosomal protein uS19.

The protein resides in the cytoplasm. In terms of biological role, an accessory protein needed during the final step in the assembly of 30S ribosomal subunit, possibly for assembly of the head region. Essential for efficient processing of 16S rRNA. May be needed both before and after RbfA during the maturation of 16S rRNA. It has affinity for free ribosomal 30S subunits but not for 70S ribosomes. This Bacillus thuringiensis (strain Al Hakam) protein is Ribosome maturation factor RimM.